The chain runs to 259 residues: Ribonuclease HII (259 aa).

Positions 72-259 (ERIAGIDEAG…PVREALGVQS (188 aa)) constitute an RNase H type-2 domain. A divalent metal cation contacts are provided by Asp-78, Glu-79, and Asp-170.

The protein belongs to the RNase HII family. Mn(2+) is required as a cofactor. Mg(2+) serves as cofactor.

It localises to the cytoplasm. The catalysed reaction is Endonucleolytic cleavage to 5'-phosphomonoester.. Its function is as follows. Endonuclease that specifically degrades the RNA of RNA-DNA hybrids. The sequence is that of Ribonuclease HII from Geobacillus thermodenitrificans (strain NG80-2).